The following is a 316-amino-acid chain: N-acetylmuramic acid 6-phosphate etherase (316 aa).

The tract at residues 1–23 (MAGFDPTLQPSDDRGHLLTEQSN) is disordered. The region spanning 66–229 (ISKRLSSGGR…STTVMVRLGK (164 aa)) is the SIS domain. The Proton donor role is filled by E94. The active site involves E125.

The protein belongs to the GCKR-like family. MurNAc-6-P etherase subfamily. As to quaternary structure, homodimer.

It carries out the reaction N-acetyl-D-muramate 6-phosphate + H2O = N-acetyl-D-glucosamine 6-phosphate + (R)-lactate. It functions in the pathway amino-sugar metabolism; N-acetylmuramate degradation. Specifically catalyzes the cleavage of the D-lactyl ether substituent of MurNAc 6-phosphate, producing GlcNAc 6-phosphate and D-lactate. This chain is N-acetylmuramic acid 6-phosphate etherase, found in Synechococcus sp. (strain CC9902).